The following is a 630-amino-acid chain: E3 ubiquitin-protein ligase TRIM41 (630 aa).

The segment at 20–61 adopts an RING-type; degenerate zinc-finger fold; the sequence is CAICLDYFTDPVSIGCGHNFCRVCVTQLWGGEDEEDRDELDR. Over residues 51-75 the composition is skewed to acidic residues; sequence EDEEDRDELDREEEEEEVGEEEEVE. 2 disordered regions span residues 51–97 and 148–176; these read EDEE…GDME and EDED…PPPA. A Phosphothreonine modification is found at T85. Residues 148–166 show a composition bias toward acidic residues; it reads EDEDEEEEVLEEDEEEELD. The B box-type zinc finger occupies 222–263; sequence NEQGICPRHQEALKLFCEVDEEAICVVCRESRSHKQHSVVPL. Zn(2+) contacts are provided by C227, H230, C249, and H255. Residue K256 forms a Glycyl lysine isopeptide (Lys-Gly) (interchain with G-Cter in SUMO2) linkage. A coiled-coil region spans residues 281 to 374; that stretch reads LRKHLEAVQK…AEAQERSQQG (94 aa). A B30.2/SPRY domain is found at 413 to 630; the sequence is LTDAIVRKMS…SKGTRIKLCP (218 aa). A Phosphoserine modification is found at S447. The tract at residues 503–535 is disordered; the sequence is ARESTHHKEKVGSGGSSVSSGDASSSRHHHRRR.

This sequence belongs to the TRIM/RBCC family. As to quaternary structure, interacts with PRKCA. Interacts with NOD2. Interacts with TRIM17; this interaction prevents TRIM41 activity on ZSCAN2. Post-translationally, auto-ubiquitinated.

The protein resides in the cytoplasm. The protein localises to the nucleus. It carries out the reaction S-ubiquitinyl-[E2 ubiquitin-conjugating enzyme]-L-cysteine + [acceptor protein]-L-lysine = [E2 ubiquitin-conjugating enzyme]-L-cysteine + N(6)-ubiquitinyl-[acceptor protein]-L-lysine.. Its pathway is protein modification; protein ubiquitination. Its function is as follows. E3 ligase that plays essential roles in innate antiviral response. Directly binds to influenza A virus or vesicular stomatitis virus nucleoproteins and targets them for ubiquitination and proteasomal degradation, thereby limiting viral infections. Activates the innate antiviral response by catalyzing monoubiquitination of CGAS, thereby activating CGAS. Also involved in innate antiviral response by mediating 'Lys-63'-linked polyubiquitylation of BCL10 which in turn hubs NEMO for activation of NF-kappa-B and IRF3 pathways. Catalyzes the ubiquitin-mediated degradation of other substrates including protein kinase C, ZSCAN21 or TOP3B suggesting additional roles besides its function in immune response. This chain is E3 ubiquitin-protein ligase TRIM41, found in Mus musculus (Mouse).